Here is a 144-residue protein sequence, read N- to C-terminus: Austinoid biosynthesis cluster protein S (144 aa).

Belongs to the trt14 isomerase family. In terms of assembly, homodimer.

Its pathway is secondary metabolite biosynthesis; terpenoid biosynthesis. Functionally, part of the gene cluster that mediates the biosynthesis of calidodehydroaustin, a fungal meroterpenoid. The first step of the pathway is the synthesis of 3,5-dimethylorsellinic acid by the polyketide synthase ausA. 3,5-dimethylorsellinic acid is then prenylated by the polyprenyl transferase ausN. Further epoxidation by the FAD-dependent monooxygenase ausM and cyclization by the probable terpene cyclase ausL lead to the formation of protoaustinoid A. Protoaustinoid A is then oxidized to spiro-lactone preaustinoid A3 by the combined action of the FAD-binding monooxygenases ausB and ausC, and the dioxygenase ausE. Acid-catalyzed keto-rearrangement and ring contraction of the tetraketide portion of preaustinoid A3 by ausJ lead to the formation of preaustinoid A4. The aldo-keto reductase ausK, with the help of ausH, is involved in the next step by transforming preaustinoid A4 into isoaustinone which is in turn hydroxylated by the P450 monooxygenase ausI to form austinolide. The cytochrome P450 monooxygenase ausG modifies austinolide to austinol. Austinol is further acetylated to austin by the O-acetyltransferase ausP, which spontaneously changes to dehydroaustin. The cytochrome P450 monooxygenase ausR then converts dehydroaustin is into 7-dehydrodehydroaustin. The hydroxylation catalyzed by ausR permits the O-acetyltransferase ausQ to add an additional acetyl group to the molecule, leading to the formation of acetoxydehydroaustin. The short chain dehydrogenase ausT catalyzes the reduction of the double bond present between carbon atoms 1 and 2 to convert 7-dehydrodehydroaustin into 1,2-dihydro-7-hydroxydehydroaustin. AusQ catalyzes not only an acetylation reaction but also the addition of the PKS ausV diketide product to 1,2-dihydro-7-hydroxydehydroaustin, forming precalidodehydroaustin. Finally, the iron/alpha-ketoglutarate-dependent dioxygenase converts precalidodehydroaustin into calidodehydroaustin. AusS is necessary for austinoids production and may play a possible function as a regulator. In terms of biological role, may play a possible function as a regulator. This is Austinoid biosynthesis cluster protein S from Aspergillus calidoustus.